We begin with the raw amino-acid sequence, 317 residues long: Melanocyte-stimulating hormone receptor (317 aa).

The Extracellular portion of the chain corresponds to 1–37 (MPVLGSQRRLLGSLNCTPPATLPLTLAPNRTGPQCLE). An N-linked (GlcNAc...) asparagine glycan is attached at Asn-29. Residues 38-63 (VSIPDGLFLSLGLVSLVENVLVVAAI) form a helical membrane-spanning segment. Topologically, residues 64–72 (AKNRNLHSP) are cytoplasmic. The helical transmembrane segment at 73-93 (MYYFICCLAMSDLLVSVSNVL) threads the bilayer. At 94–118 (ETAVMLLLEAGVLATRAAVVQQLDN) the chain is on the extracellular side. Residues 119 to 140 (VIDVLICSSMVSSLCFLGAIAV) form a helical membrane-spanning segment. The Cytoplasmic portion of the chain corresponds to 141–163 (DRYISIFYALRYHSVVTLPRAWR). The chain crosses the membrane as a helical span at residues 164-183 (IIAAIWVASILTSVLSITYY). The Extracellular portion of the chain corresponds to 184–191 (NHTVVLLC). Residues 192 to 211 (LVGFFIAMLALMAVLYVHML) traverse the membrane as a helical segment. At 212–240 (ARACQHARGIARLQKRQRPIHQGFGLKGA) the chain is on the cytoplasmic side. A helical transmembrane segment spans residues 241–266 (ATLTILLGVFFLCWGPFFLHLSLIVL). Residues 267–279 (CPQHPTCGCIFKN) lie on the Extracellular side of the membrane. Residues 280-300 (FNLFLALIICNAIVDPLIYAF) form a helical membrane-spanning segment. The Cytoplasmic segment spans residues 301-317 (RSQELRKTLQEVLQCSW). Cys-315 carries S-palmitoyl cysteine lipidation.

This sequence belongs to the G-protein coupled receptor 1 family. In terms of assembly, interacts with MGRN1, but does not undergo MGRN1-mediated ubiquitination; this interaction competes with GNAS-binding and thus inhibits agonist-induced cAMP production. Interacts with OPN3; the interaction results in a decrease in MC1R-mediated cAMP signaling and ultimately a decrease in melanin production in melanocytes.

Its subcellular location is the cell membrane. In terms of biological role, receptor for MSH (alpha, beta and gamma) and ACTH. The activity of this receptor is mediated by G proteins which activate adenylate cyclase. Mediates melanogenesis, the production of eumelanin (black/brown) and phaeomelanin (red/yellow), via regulation of cAMP signaling in melanocytes. In Ovis aries (Sheep), this protein is Melanocyte-stimulating hormone receptor (MC1R).